The following is a 244-amino-acid chain: Ribosome maturation factor RimM (244 aa).

A disordered region spans residues M1–M58. The segment covering K13–K22 has biased composition (low complexity). Over residues K35–A44 the composition is skewed to basic and acidic residues. Residues K45 to E57 are compositionally biased toward low complexity. One can recognise a PRC barrel domain in the interval A163–Y244.

The protein belongs to the RimM family. In terms of assembly, binds ribosomal protein uS19.

Its subcellular location is the cytoplasm. In terms of biological role, an accessory protein needed during the final step in the assembly of 30S ribosomal subunit, possibly for assembly of the head region. Essential for efficient processing of 16S rRNA. May be needed both before and after RbfA during the maturation of 16S rRNA. It has affinity for free ribosomal 30S subunits but not for 70S ribosomes. The chain is Ribosome maturation factor RimM from Paraburkholderia xenovorans (strain LB400).